The sequence spans 807 residues: FAD-linked oxidoreductase pytB (807 aa).

Residues 1-18 form the signal peptide; the sequence is MRFLGIAAVATFSTVVSA. Residues N45, N106, N120, N242, N295, N351, N419, and N699 are each glycosylated (N-linked (GlcNAc...) asparagine). The 172-residue stretch at 60 to 231 folds into the FAD-binding PCMH-type domain; sequence FDELPVLLAY…VEFTLSLTSI (172 aa).

The protein belongs to the oxygen-dependent FAD-linked oxidoreductase family. It depends on FAD as a cofactor.

It functions in the pathway secondary metabolite biosynthesis. Functionally, FAD-linked oxidoreductase; part of the gene cluster that mediates the biosynthesis of pyranterreones, a family of antioxidative compounds. The first step of pyranonigrins biosynthesis is performed by the hybrid PKS-NRPS synthetase pytA that condenses 4 malonyl-CoA units ato the acetyl starter unit by the modular PKS of pytA. The acyl chain is then connected to an L-serine through the amide bond by the modular NRPS of pytA. A tetramic acid is formed and released from the PKS-NRPS pytA to give pyranterreone 5 with the help of the thioesterase pytI. Pyranterreone 5 could be methylated by pytC to afford pyranterreone 6. Both pyranterreones 5 and 6 are subsequently oxidized by the FAD-linked oxidoreductase pytB and the cytochrome P450 monooxygenase pytD to form the fused gamma-pyrone core, resulting in pyranterreones 7 and 11, respectively. The hydroxy group at C-8 of pyranterreones 7 and 11 are dehydrated by the aspartyl protease pytH to form a delta-7 double bond to give pyranterreones 3 and 1, 2 accordingly. The exo-methylene of pyranterreone 3 could be reduced into a pendant methyl by reductase pytE to provide pyranterreone 4, also known as cordylactam. Pyranterreone 4 can be reconverted to pyranterreone 3 through pytB-catalyzed dehydrogenation or further oxidized to pyranterreones 9 and 10. The protein is FAD-linked oxidoreductase pytB of Aspergillus terreus (strain NIH 2624 / FGSC A1156).